The sequence spans 159 residues: Large ribosomal subunit protein uL11 (159 aa).

The disordered stretch occupies residues 1 to 26 (MAGTIEVLVPGGKANPGPPLGPELGP).

The protein belongs to the universal ribosomal protein uL11 family. In terms of assembly, part of the ribosomal stalk of the 50S ribosomal subunit. Interacts with L10 and the large rRNA to form the base of the stalk. L10 forms an elongated spine to which L12 dimers bind in a sequential fashion forming a multimeric L10(L12)X complex.

Forms part of the ribosomal stalk which helps the ribosome interact with GTP-bound translation factors. In Haloferax volcanii (strain ATCC 29605 / DSM 3757 / JCM 8879 / NBRC 14742 / NCIMB 2012 / VKM B-1768 / DS2) (Halobacterium volcanii), this protein is Large ribosomal subunit protein uL11.